Consider the following 485-residue polypeptide: N-succinylglutamate 5-semialdehyde dehydrogenase (485 aa).

220-225 (GSANTG) lines the NAD(+) pocket. Active-site residues include E243 and C278.

Belongs to the aldehyde dehydrogenase family. AstD subfamily.

It carries out the reaction N-succinyl-L-glutamate 5-semialdehyde + NAD(+) + H2O = N-succinyl-L-glutamate + NADH + 2 H(+). It functions in the pathway amino-acid degradation; L-arginine degradation via AST pathway; L-glutamate and succinate from L-arginine: step 4/5. Its function is as follows. Catalyzes the NAD-dependent reduction of succinylglutamate semialdehyde into succinylglutamate. This Vibrio parahaemolyticus serotype O3:K6 (strain RIMD 2210633) protein is N-succinylglutamate 5-semialdehyde dehydrogenase.